A 383-amino-acid polypeptide reads, in one-letter code: Phosphoenolpyruvate/phosphate translocator 2, chloroplastic (383 aa).

Residues 1–55 (MFALTFLNPNPRLPSPLFLAKSTPESALSRRSRAFSSSNSYPWRPNLRFNGFKLK) constitute a chloroplast transit peptide. 8 consecutive transmembrane segments (helical) span residues 76 to 96 (GLKL…YNIF), 108 to 128 (ATVT…MWLL), 143 to 163 (VIVQ…VSLG), 179 to 199 (FFTV…WIVC), 210 to 232 (LASF…SNVT), 253 to 273 (INLF…LAIL), 299 to 319 (IMSL…YMIL), and 350 to 369 (VSPL…YLYS). The EamA domain maps to 93–212 (YNIFNKQVLR…PIVAGVSLAS (120 aa)).

Belongs to the TPT transporter family. PPT (TC 2.A.7.9) subfamily. As to expression, widely expressed in leaves throughout development. In flowers, expressed in sepals and pistils.

The protein localises to the plastid. Its subcellular location is the chloroplast membrane. In terms of biological role, phosphoenolpyruvate/phosphate translocator that transports phosphoenolpyruvate (PEP), 2-phosphoglycerate and 3-phosphoglycerate. This chain is Phosphoenolpyruvate/phosphate translocator 2, chloroplastic (PPT2), found in Arabidopsis thaliana (Mouse-ear cress).